The following is a 173-amino-acid chain: Shikimate kinase (173 aa).

Residue 14–19 (GAGKST) coordinates ATP. Mg(2+) is bound at residue serine 18. Substrate-binding residues include aspartate 36, arginine 60, and glycine 82. Position 120 (arginine 120) interacts with ATP. Arginine 140 contributes to the substrate binding site. Position 157 (glutamine 157) interacts with ATP.

Belongs to the shikimate kinase family. As to quaternary structure, monomer. It depends on Mg(2+) as a cofactor.

It localises to the cytoplasm. It carries out the reaction shikimate + ATP = 3-phosphoshikimate + ADP + H(+). It functions in the pathway metabolic intermediate biosynthesis; chorismate biosynthesis; chorismate from D-erythrose 4-phosphate and phosphoenolpyruvate: step 5/7. Catalyzes the specific phosphorylation of the 3-hydroxyl group of shikimic acid using ATP as a cosubstrate. The chain is Shikimate kinase from Buchnera aphidicola subsp. Acyrthosiphon pisum (strain APS) (Acyrthosiphon pisum symbiotic bacterium).